We begin with the raw amino-acid sequence, 583 residues long: Aspartate--tRNA ligase (583 aa).

Glu174 serves as a coordination point for L-aspartate. The aspartate stretch occupies residues 198–201; that stretch reads QITK. Arg220 is a binding site for L-aspartate. Residues 220-222 and Gln229 contribute to the ATP site; that span reads RDE. His443 is a binding site for L-aspartate. Glu477 contributes to the ATP binding site. Arg484 serves as a coordination point for L-aspartate. Residue 529 to 532 coordinates ATP; the sequence is GLDR.

Belongs to the class-II aminoacyl-tRNA synthetase family. Type 1 subfamily. As to quaternary structure, homodimer.

It localises to the cytoplasm. It carries out the reaction tRNA(Asp) + L-aspartate + ATP = L-aspartyl-tRNA(Asp) + AMP + diphosphate. In terms of biological role, catalyzes the attachment of L-aspartate to tRNA(Asp) in a two-step reaction: L-aspartate is first activated by ATP to form Asp-AMP and then transferred to the acceptor end of tRNA(Asp). The protein is Aspartate--tRNA ligase of Streptococcus thermophilus (strain ATCC BAA-250 / LMG 18311).